The chain runs to 478 residues: Cytochrome P450 monooxygenase asqL (478 aa).

Cys407 provides a ligand contact to heme.

This sequence belongs to the cytochrome P450 family. Heme serves as cofactor.

Its pathway is secondary metabolite biosynthesis. It participates in alkaloid biosynthesis. It functions in the pathway mycotoxin biosynthesis. Cytochrome P450 monooxygenase; part of the gene cluster that mediates the biosynthesis of the aspoquinolone mycotoxins. The role of asqL within the aspoquinolone pathway has still to be determined. The first step of the pathway is catalyzed by the nonribosomal peptide synthetase asqK that condenses anthranilic acid and O-methyl-L-tyrosine to produce 4'-methoxycyclopeptin. 4'-methoxycyclopeptin is then converted to 4'-methoxydehydrocyclopeptin by the ketoglutarate-dependent dioxygenase asqJ. AsqJ also converts its first product 4'-methoxydehydrocyclopeptin to 4'-methoxycyclopenin. The following conversion of 4'-methoxycyclopenin into 4'-methoxyviridicatin is catalyzed by the cyclopenase asqI. 4'-methoxyviridicatin is the precursor of quinolone natural products, and is further converted to quinolinone B. The prenyltransferase asqH1 then catalyzes the canonical Friedel-Crafts alkylation of quinolinone B with dimethylallyl cation to yield dimethylallyl quinolone, which is subjected to FAD-dependent dehydrogenation by the FAD-linked oxidoreductase asqF to yield conjugated aryl diene. The delta(3') double bond then serves as the site of the second alkylation with DMAPP catalyzed by the prenyltransferase asqH2 to yield a carbenium ion intermediate, which can be attacked by H(2)O to yield a styrenyl quinolone containing a C3'-hydroxyprenyl chain. The FAD-dependent monooxygenase asqG performs epoxidation of the terminal C7'-C8' olefin. Finally, after dehydratation of the epoxide at C3 by asqC, the quinolone epoxide rearrangement protein asqO catalyzes an enzymatic 3-exo-tet cyclization to yield the cyclopropyl-THF ring system in aspoquinolone. The polypeptide is Cytochrome P450 monooxygenase asqL (Emericella nidulans (strain FGSC A4 / ATCC 38163 / CBS 112.46 / NRRL 194 / M139) (Aspergillus nidulans)).